The following is a 358-amino-acid chain: Phosphoribosyl pyrophosphate synthase-associated protein 2 (358 aa).

Belongs to the ribose-phosphate pyrophosphokinase family.

In terms of biological role, seems to play a negative regulatory role in 5-phosphoribose 1-diphosphate synthesis. The sequence is that of Phosphoribosyl pyrophosphate synthase-associated protein 2 (prpsap2) from Xenopus tropicalis (Western clawed frog).